The chain runs to 192 residues: Adapter protein MecA (192 aa).

It belongs to the MecA family. In terms of assembly, homodimer.

Enables the recognition and targeting of unfolded and aggregated proteins to the ClpC protease or to other proteins involved in proteolysis. Acts negatively in the development of competence by binding ComK and recruiting it to the ClpCP protease. When overexpressed, inhibits sporulation. Also involved in Spx degradation by ClpC. In Oceanobacillus iheyensis (strain DSM 14371 / CIP 107618 / JCM 11309 / KCTC 3954 / HTE831), this protein is Adapter protein MecA.